Here is an 861-residue protein sequence, read N- to C-terminus: MPSLLGLKCLGKLCSSEIGKVPSPERASLRNSHRRLLIEDLSVPETPDPAHRRRGTVIHLVYLYSAGCGPPELRFSSYDPSVAHPQDPHHSSEKPVIHCHKCGEPCKGEVLRVQTKHFHIKCFTCKVCGCDLAQGGFFIKNGDYLCTLDYQRMYGTRCHGCGEFVEGEVVTALGKTYHPNCFACTICKRPFPPGDRVTFNGRDCLCQLCAQPMSSSPKEASCSSNCAGCGRDIKNGQALLALDKQWHLGCFKCKSCGKVLTGEYISKDGSPYCEKDYQGLFGVKCEACHQFITGKVLEAGDKHYHPSCARCSRCNQMFTEGEEMYLQGSTVWHPDCKQSTKTEEKLRPPNIPRSSSDFFYPKSLIRRTGRSPALQLLSPPCLTNSNKNPRQPTRTSSESIYSRPGSSIPGSPGHTIYAKVDNEILDYKDLAAIPKVKAIYDIERPDLITYEPFYTSGYEDKQERQSLGESPRTLSPTPSAEGYQDVRDRMIHRSTSQGSINSPVYSRHSYTPTTSRSPQHFHRPELLSPGVHRWSPLRTSSFSSTHSDSRPNPPFRHHFLPHVKGNEPSSGRNSPLPYRPDSRPLTPTYAQAPKHFHVPDQGINIYRKPPIYKQHAALAAQSKASEDIIKFSKFPAAQAPDPNEIPKIETDHWPGPPSLAAVGTDPRRRSSGREEDEEELLRRRQLQEEQLMKLNSGLGQLILKEEMEKESRERASLASRYDSPLHSASHAPSSKTSSLPGYGKNGLHRPVSTDFAQYNSYGDISGGVRDYQTLPDGHMPAVRMDRGVSMPNMLEPKIFPYEMLMVTNRGRNKILRDVDRTRLERHLAPEVFWEIFGMSIQEFDKLPLWRRNDMKKKAKLF.

4 LIM zinc-binding domains span residues 97 to 156 (IHCH…MYGT), 156 to 216 (TRCH…MSSS), 224 to 283 (SNCA…LFGV), and 283 to 343 (VKCE…TKTE). At Ser216 the chain carries Phosphoserine. The segment at 374-414 (LQLLSPPCLTNSNKNPRQPTRTSSESIYSRPGSSIPGSPGH) is disordered. Polar residues predominate over residues 381–400 (CLTNSNKNPRQPTRTSSESI). A compositionally biased stretch (low complexity) spans 404 to 413 (PGSSIPGSPG). At Ser411 the chain carries Phosphoserine. A phosphotyrosine mark is found at Tyr417 and Tyr440. Disordered stretches follow at residues 459–590 (EDKQ…PTYA) and 634–682 (FPAA…ELLR). Ser466, Ser470, and Ser475 each carry phosphoserine. A compositionally biased stretch (polar residues) spans 467–478 (LGESPRTLSPTP). At Thr477 the chain carries Phosphothreonine. Ser479 carries the phosphoserine modification. The residue at position 483 (Tyr483) is a Phosphotyrosine. The segment covering 493 to 518 (RSTSQGSINSPVYSRHSYTPTTSRSP) has biased composition (polar residues). 3 positions are modified to phosphoserine: Ser496, Ser499, and Ser502. Low complexity predominate over residues 536 to 546 (PLRTSSFSSTH). Phosphoserine is present on residues Ser582 and Ser671. The stretch at 673–723 (REEDEEELLRRRQLQEEQLMKLNSGLGQLILKEEMEKESRERASLASRYDS) forms a coiled coil. Lys704 is covalently cross-linked (Glycyl lysine isopeptide (Lys-Gly) (interchain with G-Cter in SUMO2)). The disordered stretch occupies residues 713–748 (ERASLASRYDSPLHSASHAPSSKTSSLPGYGKNGLH). 4 positions are modified to phosphoserine: Ser723, Ser738, Ser760, and Ser789. Residues 724–738 (PLHSASHAPSSKTSS) show a composition bias toward low complexity. The HP domain maps to 793 to 861 (MLEPKIFPYE…NDMKKKAKLF (69 aa)).

In terms of assembly, binds F-actin. Interacts with ABRA. As to expression, isoform 1 is detected in adult retina, where it is highly expressed in the ganglion layer. Detected in rod inner segment. Isoform 2 is highly expressed in adult retina, brain, kidney and heart. Isoform 3 is highly expressed in adult retina, brain, kidney, liver, skeletal muscle, spleen and heart. Detected in embryonic retina, brain, spinal cord, peripheral sensory ganglia and thymus.

The protein resides in the cytoplasm. The protein localises to the cytoskeleton. In terms of biological role, may act as scaffold protein. May play a role in the development of the retina. Has been suggested to play a role in axon guidance. This chain is Actin-binding LIM protein 1 (Ablim1), found in Mus musculus (Mouse).